The primary structure comprises 206 residues: Oligoribonuclease (206 aa).

The region spanning 20–183 is the Exonuclease domain; the sequence is LVWLDMEMTG…ADIHESIDEL (164 aa). Tyr141 is a catalytic residue.

This sequence belongs to the oligoribonuclease family.

The protein resides in the cytoplasm. In terms of biological role, 3'-to-5' exoribonuclease specific for small oligoribonucleotides. The polypeptide is Oligoribonuclease (Burkholderia cenocepacia (strain HI2424)).